The primary structure comprises 554 residues: 3-(3-hydroxy-phenyl)propionate/3-hydroxycinnamic acid hydroxylase (554 aa).

FAD is bound by residues Gln-17–Lys-46 and Phe-285–Asp-295.

Belongs to the PheA/TfdB FAD monooxygenase family. FAD serves as cofactor.

The enzyme catalyses 3-(3-hydroxyphenyl)propanoate + NADH + O2 + H(+) = 3-(2,3-dihydroxyphenyl)propanoate + NAD(+) + H2O. It carries out the reaction (2E)-3-(3-hydroxyphenyl)prop-2-enoate + NADH + O2 + H(+) = (2E)-3-(2,3-dihydroxyphenyl)prop-2-enoate + NAD(+) + H2O. Its pathway is aromatic compound metabolism; 3-phenylpropanoate degradation. In terms of biological role, catalyzes the insertion of one atom of molecular oxygen into position 2 of the phenyl ring of 3-(3-hydroxyphenyl)propionate (3-HPP) and hydroxycinnamic acid (3HCI). The sequence is that of 3-(3-hydroxy-phenyl)propionate/3-hydroxycinnamic acid hydroxylase from Escherichia coli (strain 55989 / EAEC).